The sequence spans 212 residues: Glycerol-3-phosphate acyltransferase (212 aa).

The next 5 membrane-spanning stretches (helical) occupy residues Ile3–Ser23, Lys51–Ala71, Asp78–Phe98, Ala115–Phe135, and Ser139–Thr159.

Belongs to the PlsY family. As to quaternary structure, probably interacts with PlsX.

The protein localises to the cell inner membrane. It catalyses the reaction an acyl phosphate + sn-glycerol 3-phosphate = a 1-acyl-sn-glycero-3-phosphate + phosphate. Its pathway is lipid metabolism; phospholipid metabolism. Functionally, catalyzes the transfer of an acyl group from acyl-phosphate (acyl-PO(4)) to glycerol-3-phosphate (G3P) to form lysophosphatidic acid (LPA). This enzyme utilizes acyl-phosphate as fatty acyl donor, but not acyl-CoA or acyl-ACP. In Burkholderia ambifaria (strain MC40-6), this protein is Glycerol-3-phosphate acyltransferase.